The sequence spans 88 residues: RNA-binding protein Hfq (88 aa).

The region spanning 9 to 68 is the Sm domain; it reads DPFLNALRRERIPVSIYLVNGIKLQGQIESFDQFVILLKNTVNQMVYKHAISTVVPARAV. The tract at residues 66–88 is disordered; it reads RAVSHHSGEQQRAPSDRPEKTED. Over residues 71–88 the composition is skewed to basic and acidic residues; it reads HSGEQQRAPSDRPEKTED.

It belongs to the Hfq family. As to quaternary structure, homohexamer.

Functionally, RNA chaperone that binds small regulatory RNA (sRNAs) and mRNAs to facilitate mRNA translational regulation in response to envelope stress, environmental stress and changes in metabolite concentrations. Also binds with high specificity to tRNAs. This chain is RNA-binding protein Hfq, found in Vibrio atlanticus (strain LGP32) (Vibrio splendidus (strain Mel32)).